A 307-amino-acid polypeptide reads, in one-letter code: Small ribosomal subunit biogenesis GTPase RsgA (307 aa).

The CP-type G domain occupies 85–242; sequence RQDAWKTKLI…LIDSPGLQEF (158 aa). GTP is bound by residues 135 to 138 and 184 to 192; these read NKAD and GQSGMGKST. Positions 266, 271, 273, and 279 each coordinate Zn(2+).

This sequence belongs to the TRAFAC class YlqF/YawG GTPase family. RsgA subfamily. In terms of assembly, monomer. Associates with 30S ribosomal subunit, binds 16S rRNA. The cofactor is Zn(2+).

The protein resides in the cytoplasm. Functionally, one of several proteins that assist in the late maturation steps of the functional core of the 30S ribosomal subunit. Helps release RbfA from mature subunits. May play a role in the assembly of ribosomal proteins into the subunit. Circularly permuted GTPase that catalyzes slow GTP hydrolysis, GTPase activity is stimulated by the 30S ribosomal subunit. This Neisseria meningitidis serogroup C (strain 053442) protein is Small ribosomal subunit biogenesis GTPase RsgA.